Here is a 1224-residue protein sequence, read N- to C-terminus: Coatomer subunit alpha (1224 aa).

WD repeat units lie at residues 7–37 (TKSARVKGLSFHPKRPWILTSLHNGVIQLWD), 49–79 (EHDGPVRGIDFHKQQPLFVSGGDDYKIKVWN), 91–121 (GHLDYIRTTFFHHEYPWILSASDDQTIRVWN), and 133–163 (GHNHYVMCAQFHPSEDLVVSASLDQTVRVWD). The residue at position 173 (Ser173) is a Phosphoserine. Position 185 is a phosphothreonine (Thr185). WD repeat units lie at residues 203–233 (GHDRGVNWAAFHPTMPLIVSGADDRQVKIWR) and 247–277 (GHYNNVSCAVFHPRQELILSNSEDKSIRVWD). Residue Thr591 is modified to Phosphothreonine. Arg965 carries the omega-N-methylarginine modification. Ser1193 is subject to Phosphoserine.

As to quaternary structure, oligomeric complex that consists of at least the alpha, beta, beta', gamma, delta, epsilon and zeta subunits. Interacts with SCYL1. Interacts with JAGN1. Interacts with TMEM41B. Interacts with SVEP1. Probably interacts with PEX11A.

It is found in the cytoplasm. It localises to the golgi apparatus membrane. The protein resides in the cytoplasmic vesicle. Its subcellular location is the COPI-coated vesicle membrane. The protein localises to the secreted. Functionally, the coatomer is a cytosolic protein complex that binds to dilysine motifs and reversibly associates with Golgi non-clathrin-coated vesicles, which further mediate biosynthetic protein transport from the ER, via the Golgi up to the trans Golgi network. Coatomer complex is required for budding from Golgi membranes, and is essential for the retrograde Golgi-to-ER transport of dilysine-tagged proteins. In mammals, the coatomer can only be recruited by membranes associated to ADP-ribosylation factors (ARFs), which are small GTP-binding proteins; the complex also influences the Golgi structural integrity, as well as the processing, activity, and endocytic recycling of LDL receptors. Its function is as follows. Xenin stimulates exocrine pancreatic secretion. It inhibits pentagastrin-stimulated secretion of acid, to induce exocrine pancreatic secretion and to affect small and large intestinal motility. In the gut, xenin interacts with the neurotensin receptor. This Bos taurus (Bovine) protein is Coatomer subunit alpha (COPA).